We begin with the raw amino-acid sequence, 37 residues long: Alpha-conotoxin-like Kn1.2 (37 aa).

Residues Glu-1–Ala-15 show a composition bias toward basic and acidic residues. The propeptide occupies Glu-1–Gln-22. The segment at Glu-1–Pro-23 is disordered. 2 cysteine pairs are disulfide-bonded: Cys-25-Cys-31 and Cys-26-Cys-36. The residue at position 36 (Cys-36) is a Cysteine amide.

The protein belongs to the conotoxin A superfamily. In terms of tissue distribution, expressed by the venom duct.

The protein localises to the secreted. Functionally, alpha-conotoxins act on postsynaptic membranes, they bind to the nicotinic acetylcholine receptors (nAChR) and thus inhibit them. This toxin inhibits high voltage-activated (HVA) calcium channel currents in rat DRG neurons (13% inhibition at 1 uM toxin) probably by activating GABA(B) receptors (GABBR1 and/or GABBR2). This is Alpha-conotoxin-like Kn1.2 from Conus kinoshitai (Kinoshita's cone).